Consider the following 78-residue polypeptide: Large ribosomal subunit protein bL28 (78 aa).

The segment at 1–21 (MSRVCQVTGKRPVSGNNRSHA) is disordered.

The protein belongs to the bacterial ribosomal protein bL28 family.

The sequence is that of Large ribosomal subunit protein bL28 from Serratia proteamaculans (strain 568).